We begin with the raw amino-acid sequence, 445 residues long: Cyclic GMP-AMP phosphodiesterase SMPDL3A (445 aa).

The signal sequence occupies residues 1–22 (MALPGNFLCCLLVAWLCDPGLG). Positions 42 and 44 each coordinate Zn(2+). The cysteines at positions 59 and 78 are disulfide-linked. Asn-66 carries an N-linked (GlcNAc...) asparagine glycan. Asp-107 is a Zn(2+) binding site. An ATP-binding site is contributed by His-111. An N-linked (GlcNAc...) asparagine glycan is attached at Asn-128. Asn-148 serves as a coordination point for Zn(2+). The ATP site is built by Asn-148 and His-149. 2 N-linked (GlcNAc...) asparagine glycosylation sites follow: Asn-219 and Asn-235. Residues His-249, His-290, and His-292 each coordinate Zn(2+). N-linked (GlcNAc...) asparagine glycans are attached at residues Asn-353 and Asn-364. Disulfide bonds link Cys-417–Cys-421 and Cys-427–Cys-440.

This sequence belongs to the acid sphingomyelinase family. In terms of assembly, monomer. Homodimer; homodimerizes following 2',3'-cGAMP-binding. Zn(2+) is required as a cofactor.

The protein resides in the secreted. It catalyses the reaction 2',3'-cGAMP + H2O = 5'-pGpA(2'-5') + H(+). The enzyme catalyses 5'-pGpA(2'-5') + H2O = 5'-GpA(2'-5') + phosphate. The catalysed reaction is a ribonucleoside 5'-triphosphate + H2O = a ribonucleoside 5'-diphosphate + phosphate + H(+). It carries out the reaction ATP + H2O = ADP + phosphate + H(+). Functionally, cyclic-nucleotide phosphodiesterase that acts as a negative regulator of innate immunity by mediating degradation of 2',3'-cGAMP, thereby inhibiting the cGAS-STING signaling. Specifically linearizes 2',3'-cGAMP into 2'5'-bond pGpA and further hydrolyzes pGpA to produce GpA. Also has in vitro nucleotide phosphodiesterase activity with nucleoside triphosphates, such as ATP. Has in vitro activity with p-nitrophenyl-TMP. Has lower activity with nucleoside diphosphates, and no activity with nucleoside monophosphates. Has in vitro activity with CDP-choline, giving rise to CMP and phosphocholine. Has in vitro activity with CDP-ethanolamine. Does not have sphingomyelin phosphodiesterase activity. This is Cyclic GMP-AMP phosphodiesterase SMPDL3A (Smpdl3a) from Rattus norvegicus (Rat).